A 1150-amino-acid polypeptide reads, in one-letter code: Cell division cycle and apoptosis regulator protein 1 (1150 aa).

The segment at 1–249 (MAQFGGQKNP…TQPQPQSLLQ (249 aa)) is interaction with AR. 2 disordered regions span residues 124–146 (PTAQ…QPQK) and 285–354 (IVSQ…SPRR). Over residues 134–146 (TPRSSQQQTQPQK) the composition is skewed to low complexity. The interval 203 to 660 (QRIQTLPNQN…RALSSKGLKS (458 aa)) is interaction with GATA2. Basic and acidic residues-rich tracts occupy residues 293–334 (RRLD…ERSP) and 341–352 (ERSPRRERERSP). At Ser456 the chain carries Phosphoserine. Residues 594–618 (KQQLVEKLQGERKEADGEQDEEEKD) are a coiled coil. The interval 600–638 (KLQGERKEADGEQDEEEKDDGEAKEISTPTHWSKLDPKT) is disordered. Acidic residues predominate over residues 610 to 621 (GEQDEEEKDDGE). Thr627 carries the phosphothreonine modification. The region spanning 636 to 670 (PKTMKVNDLRKELESRALSSKGLKSQLIARLTKQL) is the SAP domain. Residue Lys637 forms a Glycyl lysine isopeptide (Lys-Gly) (interchain with G-Cter in ubiquitin) linkage. Residues 643–1150 (DLRKELESRA…QKSKENGASV (508 aa)) are interaction with GATA1. Residue Thr667 is modified to Phosphothreonine. 4 stretches are compositionally biased toward basic and acidic residues: residues 673-687 (EEQK…KSEK), 694-713 (DRKS…EEIE), 796-817 (KEDK…KKEE), and 832-855 (SGDD…KDDS). Disordered stretches follow at residues 673 to 713 (EEQK…EEIE) and 796 to 915 (KEDK…EKEK). Phosphoserine is present on residues Ser685 and Ser697. Residues 856 to 889 (KDDDETEEDNNQDEYDPMEAEEAEDEEDDRDEEE) show a composition bias toward acidic residues. Position 861 is a phosphothreonine (Thr861). Basic and acidic residues predominate over residues 890–915 (MTKRDDKRDINRYCKERPSKDKEKEK). A Glycyl lysine isopeptide (Lys-Gly) (interchain with G-Cter in SUMO1); alternate cross-link involves residue Lys1012. Lys1012 is covalently cross-linked (Glycyl lysine isopeptide (Lys-Gly) (interchain with G-Cter in SUMO2); alternate). The stretch at 1033–1114 (DVGSLLQKLE…LQFENQMNKT (82 aa)) forms a coiled coil. Glycyl lysine isopeptide (Lys-Gly) (interchain with G-Cter in SUMO2) cross-links involve residues Lys1067 and Lys1135.

As to quaternary structure, directly interacts with ESR1, NR3C1 and p53/TP53. Interacts (via N-terminus) with CALCOCO1. Interacts with MED1. Interacts with GATA1. Interacts with AR and GATA2. As to expression, expressed in various epithelial cancer cell lines, including breast, colon, prostate, pancreatic and leukemia. Expression is regulated by growth factors.

Its subcellular location is the cytoplasm. The protein localises to the perinuclear region. Associates with components of the Mediator and p160 coactivator complexes that play a role as intermediaries transducing regulatory signals from upstream transcriptional activator proteins to basal transcription machinery at the core promoter. Recruited to endogenous nuclear receptor target genes in response to the appropriate hormone. Also functions as a p53 coactivator. May thus play an important role in transcriptional regulation. May be involved in apoptosis signaling in the presence of the reinoid CD437. Apoptosis induction involves sequestration of 14-3-3 protein(s) and mediated altered expression of multiple cell cycle regulatory genes including MYC, CCNB1 and CDKN1A. Plays a role in cell cycle progression and/or cell proliferation. In association with CALCOCO1 enhances GATA1- and MED1-mediated transcriptional activation from the gamma-globin promoter during erythroid differentiation of K562 erythroleukemia cells. Can act as a both a coactivator and corepressor of AR-mediated transcription. Contributes to chromatin looping and AR transcription complex assembly by stabilizing AR-GATA2 association on chromatin and facilitating MED1 and RNA polymerase II recruitment to AR-binding sites. May play an important role in the growth and tumorigenesis of prostate cancer cells. The protein is Cell division cycle and apoptosis regulator protein 1 (CCAR1) of Homo sapiens (Human).